The following is a 104-amino-acid chain: Large ribosomal subunit protein uL24 (104 aa).

The protein belongs to the universal ribosomal protein uL24 family. As to quaternary structure, part of the 50S ribosomal subunit.

One of two assembly initiator proteins, it binds directly to the 5'-end of the 23S rRNA, where it nucleates assembly of the 50S subunit. Its function is as follows. One of the proteins that surrounds the polypeptide exit tunnel on the outside of the subunit. The protein is Large ribosomal subunit protein uL24 of Caulobacter sp. (strain K31).